Here is a 179-residue protein sequence, read N- to C-terminus: Large ribosomal subunit protein uL5 (179 aa).

It belongs to the universal ribosomal protein uL5 family. As to quaternary structure, part of the 50S ribosomal subunit; part of the 5S rRNA/L5/L18/L25 subcomplex. Contacts the 5S rRNA and the P site tRNA. Forms a bridge to the 30S subunit in the 70S ribosome.

This is one of the proteins that bind and probably mediate the attachment of the 5S RNA into the large ribosomal subunit, where it forms part of the central protuberance. In the 70S ribosome it contacts protein S13 of the 30S subunit (bridge B1b), connecting the 2 subunits; this bridge is implicated in subunit movement. Contacts the P site tRNA; the 5S rRNA and some of its associated proteins might help stabilize positioning of ribosome-bound tRNAs. This chain is Large ribosomal subunit protein uL5, found in Bacillus anthracis (strain A0248).